The sequence spans 255 residues: HTH-type transcriptional regulator SkgA (255 aa).

The region spanning 3 to 72 (VYTVKQMARL…LKDIQAALDQ (70 aa)) is the HTH merR-type domain. A DNA-binding region (H-T-H motif) is located at residues 6–25 (VKQMARLSGVSVRALHHYDA).

In terms of biological role, regulates the induction of katG (catalase-peroxidase) in stationary phase. The polypeptide is HTH-type transcriptional regulator SkgA (skgA) (Caulobacter vibrioides (strain ATCC 19089 / CIP 103742 / CB 15) (Caulobacter crescentus)).